The sequence spans 92 residues: Small ribosomal subunit protein uS19 (92 aa).

Functionally, protein S19 forms a complex with S13 that binds strongly to the 16S ribosomal RNA. The protein is Small ribosomal subunit protein uS19 of Rhodopseudomonas palustris (strain ATCC BAA-98 / CGA009).